A 302-amino-acid chain; its full sequence is Aspartate carbamoyltransferase catalytic subunit (302 aa).

Carbamoyl phosphate contacts are provided by Arg-49 and Thr-50. Lys-77 is a binding site for L-aspartate. Residues Arg-99, His-126, and Gln-129 each coordinate carbamoyl phosphate. Residues Arg-159 and Arg-209 each contribute to the L-aspartate site. 2 residues coordinate carbamoyl phosphate: Ala-250 and Pro-251.

This sequence belongs to the aspartate/ornithine carbamoyltransferase superfamily. ATCase family. In terms of assembly, heterododecamer (2C3:3R2) of six catalytic PyrB chains organized as two trimers (C3), and six regulatory PyrI chains organized as three dimers (R2).

It carries out the reaction carbamoyl phosphate + L-aspartate = N-carbamoyl-L-aspartate + phosphate + H(+). Its pathway is pyrimidine metabolism; UMP biosynthesis via de novo pathway; (S)-dihydroorotate from bicarbonate: step 2/3. Catalyzes the condensation of carbamoyl phosphate and aspartate to form carbamoyl aspartate and inorganic phosphate, the committed step in the de novo pyrimidine nucleotide biosynthesis pathway. This Staphylococcus carnosus (strain TM300) protein is Aspartate carbamoyltransferase catalytic subunit.